A 184-amino-acid chain; its full sequence is Large ribosomal subunit protein uL18 (184 aa).

This sequence belongs to the universal ribosomal protein uL18 family. Part of the 50S ribosomal subunit. Contacts the 5S and 23S rRNAs.

This is one of the proteins that bind and probably mediate the attachment of the 5S RNA into the large ribosomal subunit, where it forms part of the central protuberance. In Haloferax mediterranei (strain ATCC 33500 / DSM 1411 / JCM 8866 / NBRC 14739 / NCIMB 2177 / R-4) (Halobacterium mediterranei), this protein is Large ribosomal subunit protein uL18.